A 155-amino-acid chain; its full sequence is Ribosome maturation factor RimP (155 aa).

It belongs to the RimP family.

The protein resides in the cytoplasm. Required for maturation of 30S ribosomal subunits. In Bacteroides fragilis (strain ATCC 25285 / DSM 2151 / CCUG 4856 / JCM 11019 / LMG 10263 / NCTC 9343 / Onslow / VPI 2553 / EN-2), this protein is Ribosome maturation factor RimP.